Consider the following 57-residue polypeptide: Preprotein translocase subunit SecG (57 aa).

Residues 1–31 (MAKKKGEGPGLMSSAGLMRYFESEETSIKLD) lie on the Cytoplasmic side of the membrane. A helical transmembrane segment spans residues 32–53 (PKMVIGAGIASGVAIMALNITF). The Extracellular segment spans residues 54 to 57 (GLWP).

The protein belongs to the SEC61-beta family. As to quaternary structure, component of the protein translocase complex. Heterotrimer consisting of alpha (SecY), beta (SecG) and gamma (SecE) subunits. Can form oligomers of the heterotrimer.

The protein resides in the cell membrane. In terms of biological role, involved in protein export. The function of the beta subunit is unknown, but it may be involved in stabilization of the trimeric complex. The polypeptide is Preprotein translocase subunit SecG (Methanothrix thermoacetophila (strain DSM 6194 / JCM 14653 / NBRC 101360 / PT) (Methanosaeta thermophila)).